The sequence spans 213 residues: Probable aspartate aminotransferase (213 aa).

L-aspartate-binding residues include Gly-47, Trp-133, and Asn-183.

This sequence belongs to the class-I pyridoxal-phosphate-dependent aminotransferase family. Homodimer. Requires pyridoxal 5'-phosphate as cofactor.

The protein resides in the cytoplasm. It carries out the reaction L-aspartate + 2-oxoglutarate = oxaloacetate + L-glutamate. The polypeptide is Probable aspartate aminotransferase (aspC) (Streptomyces griseus).